Here is a 477-residue protein sequence, read N- to C-terminus: Exodeoxyribonuclease 7 large subunit (477 aa).

The disordered stretch occupies residues lysine 452–glycine 477.

Belongs to the XseA family. As to quaternary structure, heterooligomer composed of large and small subunits.

It localises to the cytoplasm. The enzyme catalyses Exonucleolytic cleavage in either 5'- to 3'- or 3'- to 5'-direction to yield nucleoside 5'-phosphates.. Its function is as follows. Bidirectionally degrades single-stranded DNA into large acid-insoluble oligonucleotides, which are then degraded further into small acid-soluble oligonucleotides. The protein is Exodeoxyribonuclease 7 large subunit of Erythrobacter litoralis (strain HTCC2594).